A 450-amino-acid chain; its full sequence is Sorting nexin-4 (450 aa).

N-acetylmethionine is present on methionine 1. The segment at 1 to 46 (MEQAPPDPERQLQPAPLEPLGSPDAGLGAAVGKEAEGAGEESSGVD) is disordered. The residue at position 22 (serine 22) is a Phosphoserine. In terms of domain architecture, PX spans 61–187 (SVSEAEKRTG…YLFLTQEGNW (127 aa)). A 1,2-diacyl-sn-glycero-3-phospho-(1D-myo-inositol-3-phosphate) is bound by residues arginine 106, serine 108, lysine 132, and arginine 154.

Belongs to the sorting nexin family. Heterodimer; heterodimerizes with SNX7 or SNX30. Interacts with WWC1/KIBRA. Identified in a complex with WWC1/KIBRA and dynein components DYNLL1 and DYNC1I2. Interacts with BIN1.

It is found in the early endosome membrane. Involved in the regulation of endocytosis and in several stages of intracellular trafficking. Plays a role in recycling endocytosed transferrin receptor and prevent its degradation. Involved in autophagosome assembly by regulating trafficking and recycling of phospholipid scramblase ATG9A. In Homo sapiens (Human), this protein is Sorting nexin-4.